A 303-amino-acid polypeptide reads, in one-letter code: UDP-3-O-acyl-N-acetylglucosamine deacetylase (303 aa).

Zn(2+) is bound by residues His78, His237, and Asp241. The active-site Proton donor is His264.

This sequence belongs to the LpxC family. It depends on Zn(2+) as a cofactor.

It catalyses the reaction a UDP-3-O-[(3R)-3-hydroxyacyl]-N-acetyl-alpha-D-glucosamine + H2O = a UDP-3-O-[(3R)-3-hydroxyacyl]-alpha-D-glucosamine + acetate. The protein operates within glycolipid biosynthesis; lipid IV(A) biosynthesis; lipid IV(A) from (3R)-3-hydroxytetradecanoyl-[acyl-carrier-protein] and UDP-N-acetyl-alpha-D-glucosamine: step 2/6. In terms of biological role, catalyzes the hydrolysis of UDP-3-O-myristoyl-N-acetylglucosamine to form UDP-3-O-myristoylglucosamine and acetate, the committed step in lipid A biosynthesis. The polypeptide is UDP-3-O-acyl-N-acetylglucosamine deacetylase (Xanthomonas campestris pv. campestris (strain B100)).